We begin with the raw amino-acid sequence, 171 residues long: Transcription antitermination protein NusB (171 aa).

This sequence belongs to the NusB family.

Functionally, involved in transcription antitermination. Required for transcription of ribosomal RNA (rRNA) genes. Binds specifically to the boxA antiterminator sequence of the ribosomal RNA (rrn) operons. This Pelodictyon phaeoclathratiforme (strain DSM 5477 / BU-1) protein is Transcription antitermination protein NusB.